A 435-amino-acid chain; its full sequence is Trigger factor (435 aa).

One can recognise a PPIase FKBP-type domain in the interval 161 to 246 (GKRVSIDFVG…VNKVEARELP (86 aa)).

This sequence belongs to the FKBP-type PPIase family. Tig subfamily.

It is found in the cytoplasm. The enzyme catalyses [protein]-peptidylproline (omega=180) = [protein]-peptidylproline (omega=0). Its function is as follows. Involved in protein export. Acts as a chaperone by maintaining the newly synthesized protein in an open conformation. Functions as a peptidyl-prolyl cis-trans isomerase. This Vibrio campbellii (strain ATCC BAA-1116) protein is Trigger factor.